Reading from the N-terminus, the 83-residue chain is Apolipoprotein C-I, basic form (83 aa).

The N-terminal stretch at 1-26 (MRLFLSLPVLVVVLSIVLEGPAPAQG) is a signal peptide.

The protein belongs to the apolipoprotein C1 family.

Its subcellular location is the secreted. Functionally, inhibitor of lipoprotein binding to the low density lipoprotein (LDL) receptor, LDL receptor-related protein, and very low density lipoprotein (VLDL) receptor. Associates with high density lipoproteins (HDL) and the triacylglycerol-rich lipoproteins in the plasma and makes up about 10% of the protein of the VLDL and 2% of that of HDL. Appears to interfere directly with fatty acid uptake and is also the major plasma inhibitor of cholesteryl ester transfer protein (CETP). Binds free fatty acids and reduces their intracellular esterification. Modulates the interaction of APOE with beta-migrating VLDL and inhibits binding of beta-VLDL to the LDL receptor-related protein. The polypeptide is Apolipoprotein C-I, basic form (APOC1B) (Pan troglodytes (Chimpanzee)).